Reading from the N-terminus, the 368-residue chain is RNA polymerase sigma factor SigA (368 aa).

Residues 16–90 (TLTLEDVKKQ…KLNPSDLSAP (75 aa)) are sigma-70 factor domain-1. Positions 69–90 (LVNEKDSSDTDEKLNPSDLSAP) are disordered. Over residues 71-83 (NEKDSSDTDEKLN) the composition is skewed to basic and acidic residues. Positions 135 to 205 (LAEANLRLVV…TRAIADQART (71 aa)) are sigma-70 factor domain-2. An Interaction with polymerase core subunit RpoC motif is present at residues 159–162 (DLIQ). The tract at residues 214–291 (ETINKLIRVQ…QEAQSPSDHA (78 aa)) is sigma-70 factor domain-3. The interval 303–356 (VLDTLTDREENVLRLRFGLDDGRTRTLEEVGKVFGVTRERIRQIEAKALRKLRH) is sigma-70 factor domain-4. The segment at residues 329–348 (LEEVGKVFGVTRERIRQIEA) is a DNA-binding region (H-T-H motif).

Belongs to the sigma-70 factor family. RpoD/SigA subfamily. In terms of assembly, interacts transiently with the RNA polymerase catalytic core formed by RpoA, RpoB, RpoC and RpoZ (2 alpha, 1 beta, 1 beta' and 1 omega subunit) to form the RNA polymerase holoenzyme that can initiate transcription. Interacts (via sigma-70 factor domain 4) with the phage G1 protein gp67; this inhibits rRNA synthesis. Interaction with phage G1 protein gp67 does not inhibit transcription in general, but selectively inhibits transcription from promoters that require interaction of the RNA polymerase alpha subunit with DNA sequences upstream of the -35 promoter element.

The protein localises to the cytoplasm. Its function is as follows. Sigma factors are initiation factors that promote the attachment of RNA polymerase to specific initiation sites and are then released. This sigma factor is the primary sigma factor during exponential growth. In Staphylococcus aureus (strain NCTC 8325 / PS 47), this protein is RNA polymerase sigma factor SigA.